Consider the following 179-residue polypeptide: Large ribosomal subunit protein uL6 (179 aa).

This sequence belongs to the universal ribosomal protein uL6 family. In terms of assembly, part of the 50S ribosomal subunit.

This protein binds to the 23S rRNA, and is important in its secondary structure. It is located near the subunit interface in the base of the L7/L12 stalk, and near the tRNA binding site of the peptidyltransferase center. This Syntrophobacter fumaroxidans (strain DSM 10017 / MPOB) protein is Large ribosomal subunit protein uL6.